The following is a 72-amino-acid chain: Translation initiation factor IF-1 (72 aa).

In terms of domain architecture, S1-like spans 1–72; that stretch reads MAKEGNIEME…SKGRIVYRAR (72 aa).

This sequence belongs to the IF-1 family. As to quaternary structure, component of the 30S ribosomal translation pre-initiation complex which assembles on the 30S ribosome in the order IF-2 and IF-3, IF-1 and N-formylmethionyl-tRNA(fMet); mRNA recruitment can occur at any time during PIC assembly.

Its subcellular location is the cytoplasm. Functionally, one of the essential components for the initiation of protein synthesis. Stabilizes the binding of IF-2 and IF-3 on the 30S subunit to which N-formylmethionyl-tRNA(fMet) subsequently binds. Helps modulate mRNA selection, yielding the 30S pre-initiation complex (PIC). Upon addition of the 50S ribosomal subunit IF-1, IF-2 and IF-3 are released leaving the mature 70S translation initiation complex. The protein is Translation initiation factor IF-1 of Hahella chejuensis (strain KCTC 2396).